Here is a 388-residue protein sequence, read N- to C-terminus: Serpin B11 (388 aa).

Positions 338–362 are RCL; that stretch reads EEGTEAAAATGESISVKRLPVTVQF.

The protein belongs to the serpin family. Ov-serpin subfamily. As to expression, expressed in eye, lung, lymphocytes, thymus, stomach, uterus, heart, brain, liver, skeletal muscle, and in day 7, 15, and 17 embryos.

The protein localises to the cytoplasm. Inhibitor of serine proteases. Has moderate inhibitory activity for trypsin-like peptidases, but also some activity with cysteine peptidases, cathepsin L, K, and V, and the serine peptidase, tryptase gamma. The polypeptide is Serpin B11 (Serpinb11) (Mus musculus (Mouse)).